The following is a 303-amino-acid chain: N-acetylmuramic acid 6-phosphate etherase (303 aa).

Residues 61–224 (IVQAFQQGGR…TTASMILLGK (164 aa)) form the SIS domain. The active-site Proton donor is glutamate 89. Glutamate 120 is a catalytic residue.

The protein belongs to the GCKR-like family. MurNAc-6-P etherase subfamily. In terms of assembly, homodimer.

It catalyses the reaction N-acetyl-D-muramate 6-phosphate + H2O = N-acetyl-D-glucosamine 6-phosphate + (R)-lactate. The protein operates within amino-sugar metabolism; 1,6-anhydro-N-acetylmuramate degradation. It participates in amino-sugar metabolism; N-acetylmuramate degradation. Its pathway is cell wall biogenesis; peptidoglycan recycling. Its function is as follows. Specifically catalyzes the cleavage of the D-lactyl ether substituent of MurNAc 6-phosphate, producing GlcNAc 6-phosphate and D-lactate. Together with AnmK, is also required for the utilization of anhydro-N-acetylmuramic acid (anhMurNAc) either imported from the medium or derived from its own cell wall murein, and thus plays a role in cell wall recycling. The polypeptide is N-acetylmuramic acid 6-phosphate etherase (murQ) (Haemophilus influenzae (strain ATCC 51907 / DSM 11121 / KW20 / Rd)).